The primary structure comprises 41 residues: Antimicrobial protein PN-AMP1 (41 aa).

Pyrrolidone carboxylic acid is present on glutamine 1. The 41-residue stretch at 1-41 folds into the Chitin-binding type-1 domain; it reads QQCGRQASGRLCGNRLCCSQWGYCGSTASYCGAGCQSQCRS. Disulfide bonds link cysteine 3–cysteine 18, cysteine 12–cysteine 24, cysteine 17–cysteine 31, and cysteine 35–cysteine 39.

Functionally, chitin-binding protein with a defensive function against numerous chitin containing fungal pathogens. It is also an inhibitor of Gram-positive bacteria such as B.subtilis. This is Antimicrobial protein PN-AMP1 from Ipomoea nil (Japanese morning glory).